We begin with the raw amino-acid sequence, 261 residues long: Probable enoyl-CoA hydratase EchA17 (261 aa).

Belongs to the enoyl-CoA hydratase/isomerase family.

The catalysed reaction is a (3S)-3-hydroxyacyl-CoA = a (2E)-enoyl-CoA + H2O. The enzyme catalyses a 4-saturated-(3S)-3-hydroxyacyl-CoA = a (3E)-enoyl-CoA + H2O. In terms of biological role, could possibly oxidize fatty acids using specific components. This Mycobacterium bovis (strain BCG / Pasteur 1173P2) protein is Probable enoyl-CoA hydratase EchA17 (echA17).